Reading from the N-terminus, the 301-residue chain is Homoserine O-acetyltransferase (301 aa).

Residue Cys-142 is the Acyl-thioester intermediate of the active site. Lys-163 and Ser-192 together coordinate substrate. The Proton acceptor role is filled by His-235. Glu-237 is a catalytic residue. Arg-249 contributes to the substrate binding site.

The protein belongs to the MetA family.

Its subcellular location is the cytoplasm. The catalysed reaction is L-homoserine + acetyl-CoA = O-acetyl-L-homoserine + CoA. It functions in the pathway amino-acid biosynthesis; L-methionine biosynthesis via de novo pathway; O-acetyl-L-homoserine from L-homoserine: step 1/1. Transfers an acetyl group from acetyl-CoA to L-homoserine, forming acetyl-L-homoserine. The sequence is that of Homoserine O-acetyltransferase from Novosphingobium aromaticivorans (strain ATCC 700278 / DSM 12444 / CCUG 56034 / CIP 105152 / NBRC 16084 / F199).